A 450-amino-acid polypeptide reads, in one-letter code: UDP-N-acetylmuramoylalanine--D-glutamate ligase (450 aa).

Position 119–125 (119–125 (GSNGKTT)) interacts with ATP.

It belongs to the MurCDEF family.

The protein localises to the cytoplasm. The catalysed reaction is UDP-N-acetyl-alpha-D-muramoyl-L-alanine + D-glutamate + ATP = UDP-N-acetyl-alpha-D-muramoyl-L-alanyl-D-glutamate + ADP + phosphate + H(+). It participates in cell wall biogenesis; peptidoglycan biosynthesis. Cell wall formation. Catalyzes the addition of glutamate to the nucleotide precursor UDP-N-acetylmuramoyl-L-alanine (UMA). The sequence is that of UDP-N-acetylmuramoylalanine--D-glutamate ligase from Bacillus thuringiensis (strain Al Hakam).